A 187-amino-acid polypeptide reads, in one-letter code: UPF0301 protein Noc_0368 (187 aa).

Belongs to the UPF0301 (AlgH) family.

This is UPF0301 protein Noc_0368 from Nitrosococcus oceani (strain ATCC 19707 / BCRC 17464 / JCM 30415 / NCIMB 11848 / C-107).